We begin with the raw amino-acid sequence, 360 residues long: Protein Wnt-2 (360 aa).

Residues 1 to 25 (MNAPVGGIWLWLPLLLTWLSPEVSS) form the signal peptide. 11 disulfide bridges follow: Cys76/Cys87, Cys127/Cys135, Cys137/Cys157, Cys206/Cys220, Cys208/Cys215, Cys278/Cys309, Cys294/Cys304, Cys308/Cys348, Cys324/Cys339, Cys326/Cys336, and Cys331/Cys332. The O-palmitoleoyl serine; by PORCN moiety is linked to residue Ser212. The N-linked (GlcNAc...) asparagine glycan is linked to Asn295.

This sequence belongs to the Wnt family. Palmitoleoylation is required for efficient binding to frizzled receptors. Depalmitoleoylation leads to Wnt signaling pathway inhibition.

The protein resides in the secreted. It is found in the extracellular space. Its subcellular location is the extracellular matrix. In terms of biological role, ligand for members of the frizzled family of seven transmembrane receptors. Probable developmental protein. May be a signaling molecule which affects the development of discrete regions of tissues. Is likely to signal over only few cell diameters. This is Protein Wnt-2 (WNT2) from Rhinolophus ferrumequinum (Greater horseshoe bat).